The following is a 74-amino-acid chain: Large ribosomal subunit protein bL31 (74 aa).

Zn(2+) is bound by residues C16, C18, C38, and C41.

It belongs to the bacterial ribosomal protein bL31 family. Type A subfamily. As to quaternary structure, part of the 50S ribosomal subunit. Zn(2+) serves as cofactor.

Binds the 23S rRNA. This chain is Large ribosomal subunit protein bL31, found in Salinispora tropica (strain ATCC BAA-916 / DSM 44818 / JCM 13857 / NBRC 105044 / CNB-440).